Reading from the N-terminus, the 100-residue chain is Replication restart protein PriB (100 aa).

Residues 1 to 100 (MTNRMELSGT…VLHADNITQI (100 aa)) form the SSB domain.

This sequence belongs to the PriB family. In terms of assembly, homodimer. Interacts with PriA and DnaT. Component of the replication restart primosome. Primosome assembly occurs via a 'hand-off' mechanism. PriA binds to replication forks, subsequently PriB then DnaT bind; DnaT then displaces ssDNA to generate the helicase loading substrate.

Involved in the restart of stalled replication forks, which reloads the replicative helicase on sites other than the origin of replication; the PriA-PriB pathway is the major replication restart pathway. During primosome assembly it facilitates complex formation between PriA and DnaT on DNA; stabilizes PriA on DNA. Stimulates the DNA unwinding activity of PriA helicase. This chain is Replication restart protein PriB, found in Vibrio parahaemolyticus serotype O3:K6 (strain RIMD 2210633).